Here is a 37-residue protein sequence, read N- to C-terminus: Dolichyl-diphosphooligosaccharide--protein glycosyltransferase subunit 4B (37 aa).

Over 1–8 (MFDDQDLG) the chain is Lumenal. Residues 9–29 (FFANFLGIFIFVLVMAYHFVM) form a helical membrane-spanning segment. Topologically, residues 30-37 (ADVKYEGN) are cytoplasmic.

Belongs to the OST4 family. Component of the oligosaccharyltransferase (OST) complex.

It localises to the endoplasmic reticulum membrane. In terms of biological role, subunit of the oligosaccharyl transferase (OST) complex that catalyzes the initial transfer of a defined glycan (Glc(3)Man(9)GlcNAc(2) in eukaryotes) from the lipid carrier dolichol-pyrophosphate to an asparagine residue within an Asn-X-Ser/Thr consensus motif in nascent polypeptide chains, the first step in protein N-glycosylation. N-glycosylation occurs cotranslationally and the complex associates with the Sec61 complex at the channel-forming translocon complex that mediates protein translocation across the endoplasmic reticulum (ER). All subunits are required for a maximal enzyme activity. This is Dolichyl-diphosphooligosaccharide--protein glycosyltransferase subunit 4B (OST4B) from Oryza sativa subsp. japonica (Rice).